The chain runs to 973 residues: Coatomer subunit beta (973 aa).

HEAT repeat units follow at residues histidine 98–glutamate 133 and leucine 134–histidine 170. Serine 181 carries the post-translational modification Phosphoserine. HEAT repeat units follow at residues asparagine 279–glycine 317 and alanine 318–alanine 354. Serine 540 carries the phosphoserine modification.

In terms of assembly, oligomeric complex that consists of at least the alpha, beta, beta', gamma, delta, epsilon and zeta subunits. The complex interacts with ARF1 and PAB1. Post-translationally, the N-terminus is blocked.

The protein resides in the cytoplasm. The protein localises to the golgi apparatus membrane. It is found in the cytoplasmic vesicle. It localises to the COPI-coated vesicle membrane. In terms of biological role, the coatomer is a cytosolic protein complex that binds to dilysine motifs and reversibly associates with Golgi non-clathrin-coated vesicles, which further mediate biosynthetic protein transport from the ER, via the Golgi up to the trans Golgi network. Coatomer complex is required for budding from Golgi membranes, and is essential for the retrograde Golgi-to-ER transport of dilysine-tagged proteins. Required for mitochondrial morphology. The sequence is that of Coatomer subunit beta (SEC26) from Saccharomyces cerevisiae (strain ATCC 204508 / S288c) (Baker's yeast).